A 369-amino-acid chain; its full sequence is Superinfection exclusion protein (369 aa).

Residues Met1–Thr15 form the signal peptide.

Belongs to the serpin family. Orthopoxvirus OPG040 subfamily. As to quaternary structure, interacts with A56 protein.

The protein localises to the virion membrane. Its subcellular location is the host cell membrane. In terms of biological role, prevents cell to cell fusion via its interaction with A56 protein. The A56-K2 complex associates with components of the entry fusion complex (EFC) presumably to avoid superinfection and syncytium formation. In Vaccinia virus (strain Ankara) (VACV), this protein is Superinfection exclusion protein (OPG040).